Consider the following 202-residue polypeptide: LexA repressor (202 aa).

Residues S123 and K159 each act as for autocatalytic cleavage activity in the active site.

Belongs to the peptidase S24 family. As to quaternary structure, homodimer.

It catalyses the reaction Hydrolysis of Ala-|-Gly bond in repressor LexA.. In terms of biological role, binds the consensus sequence 5'-TGTTC-N(4)-GAACA-3'; some genes have a tandem consensus sequence, at high concentrations their binding is cooperative. Binds to the promoters of a number of genes, including dinB, imuA, lexA, recA, recQ, splB and uvrA. Represses a number of genes involved in the response to DNA damage (SOS response). In the presence of single-stranded DNA, RecA interacts with LexA causing an autocatalytic cleavage which disrupts the DNA-binding part of LexA, leading to derepression of the SOS regulon and eventually DNA repair. This Verrucomicrobium spinosum (strain ATCC 43997 / DSM 4136 / JCM 18804 / IFAM 1439) protein is LexA repressor.